Here is a 67-residue protein sequence, read N- to C-terminus: Small ribosomal subunit protein eS17 (67 aa).

The protein belongs to the eukaryotic ribosomal protein eS17 family. Part of the 30S ribosomal subunit.

The chain is Small ribosomal subunit protein eS17 from Thermococcus kodakarensis (strain ATCC BAA-918 / JCM 12380 / KOD1) (Pyrococcus kodakaraensis (strain KOD1)).